The following is a 551-amino-acid chain: Nose resistant to fluoxetine protein 5 (551 aa).

An N-terminal signal peptide occupies residues 1 to 20 (MSRNFHIFFLLVSIIQVGNS). Cysteine 151 and cysteine 232 are disulfide-bonded. The tract at residues 241–265 (EDSEQEEGNVETTVAPTPDDDNSTL) is disordered.

This sequence belongs to the BPI/LBP/Plunc superfamily. BPI/LBP family. In terms of assembly, interacts with ttr-52. In terms of tissue distribution, expressed in the body wall muscle cells and detected at the basal surface of pharyngeal cells and basal-lateral membranes of the intestine.

Its subcellular location is the secreted. Plays a role in the uptake of a range of molecules including phosphatidylserine, lipids and xenobiotic compounds from the intestine to surrounding tissues. Possesses lipid transfer activity. Mediates transport of lipids from intestine to reproductive tract. Binds phosphatidylserine. Plays a role in efficient clearance of cell corpses by mediating phosphatidylserine appearance on phagocytic cells, thus promoting phagocytic engulfment of apoptotic cells. Vital for embryonic development. This Caenorhabditis elegans protein is Nose resistant to fluoxetine protein 5.